The chain runs to 511 residues: 4,4'-diapophytoene desaturase (4,4'-diapolycopene-forming) (511 aa).

Belongs to the carotenoid/retinoid oxidoreductase family.

It carries out the reaction 15-cis-4,4'-diapophytoene + 4 FAD + 4 H(+) = all-trans-4,4'-diapolycopene + 4 FADH2. The protein operates within carotenoid biosynthesis. Functionally, involved in the biosynthesis of C30 carotenoids. Catalyzes four successive dehydrogenation reactions that lead to the introduction of four double bonds into 4,4'-diapophytoene (dehydrosqualene) to yield 4,4'-diapolycopene. The sequence is that of 4,4'-diapophytoene desaturase (4,4'-diapolycopene-forming) from Methylomonas sp.